Consider the following 333-residue polypeptide: Gamma-D-glutamyl-L-lysine dipeptidyl-peptidase (333 aa).

A signal peptide spans 1–23; the sequence is MKKVGTAFLTTLFIFSSFTSAHA. Substrate-binding positions include Glu83, Tyr118, 237–239, and 256–257; these read DCS and DS. The NlpC/P60 domain maps to 208-332; the sequence is TPAADDLINT…EEYAGARRYL (125 aa). Cys238 functions as the Nucleophile in the catalytic mechanism. Catalysis depends on His291, which acts as the Proton acceptor. The active site involves His303.

Belongs to the peptidase C40 family. In terms of assembly, monomer in solution.

It carries out the reaction The enzyme releases L-Ala-gamma-D-Glu dipeptides from cell wall peptides via cleavage of an L-Ala-gamma-D-Glu-|-L-Lys bond.. Its pathway is cell wall degradation; peptidoglycan degradation. In terms of biological role, specifically hydrolyzes gamma-D-glutamyl-L-lysine bonds in murein peptides, releasing L-Ala-D-Glu. This Bacillus cereus (strain ATCC 10987 / NRS 248) protein is Gamma-D-glutamyl-L-lysine dipeptidyl-peptidase.